We begin with the raw amino-acid sequence, 277 residues long: MSLCEDMLLCNYRKCRIKLSGYAWVTACSHIFCDQHGSGEFSRSPAICPACNSTLSGKLDIVRTELSPSEEYKAMVLAGLRPEIVLDISSRALAFWTYQVHQERLYQEYNFSKAEGHLKQMEKIYTQQIQSKDVELTSMKGEVTSMKKVLEEYKKKFSDISEKLMERNRQYQKLQGLYDSLRLRNITIANHEGTLEPSMIAQSGVLGFPLGNNSKFPLDNTPVRNRGDGDGDFQFRPFFAGSPTAPEPSNSFFSFVSPSRELEQQQVSSRAFKVKRI.

The RING-type; atypical zinc finger occupies 4 to 51; it reads CEDMLLCNYRKCRIKLSGYAWVTACSHIFCDQHGSGEFSRSPAICPAC. Residues 127-182 are a coiled coil; that stretch reads QQIQSKDVELTSMKGEVTSMKKVLEEYKKKFSDISEKLMERNRQYQKLQGLYDSLR.

In terms of assembly, interacts with CCNB1, UBE2L3 and NF2. In terms of processing, ubiquitinated; autoubiquitinated. Phosphorylated by CDK1 on serine or threonine residues (in vitro). In terms of tissue distribution, highly expressed in heart. Detected at intermediate levels in liver and kidney, and at low levels in placenta, brain and lung.

It is found in the nucleus. The protein resides in the chromosome. The enzyme catalyses S-ubiquitinyl-[E2 ubiquitin-conjugating enzyme]-L-cysteine + [acceptor protein]-L-lysine = [E2 ubiquitin-conjugating enzyme]-L-cysteine + N(6)-ubiquitinyl-[acceptor protein]-L-lysine.. Its pathway is protein modification; protein ubiquitination. Ubiquitin E3 ligase that acts as a limiting factor for crossing-over during meiosis: required during zygonema to limit the colocalization of RNF212 with MutS-gamma-associated recombination sites and thereby establish early differentiation of crossover and non-crossover sites. Later, it is directed by MutL-gamma to stably accumulate at designated crossover sites. Probably promotes the dissociation of RNF212 and MutS-gamma to allow the progression of recombination and the implementation of the final steps of crossing over. Modulates cyclin-B levels and participates in the regulation of cell cycle progression through the G2 phase. Overexpression causes delayed entry into mitosis. The sequence is that of E3 ubiquitin-protein ligase CCNB1IP1 (CCNB1IP1) from Homo sapiens (Human).